Reading from the N-terminus, the 160-residue chain is Lipoprotein signal peptidase (160 aa).

A run of 3 helical transmembrane segments spans residues 7–27 (VIYY…KWLV), 61–81 (GQFW…IIYI), and 91–111 (AGIG…DRVF). Active-site residues include D117 and D135. Residues 133 to 153 (IADSALTVGVILLFIHMFFFA) traverse the membrane as a helical segment.

This sequence belongs to the peptidase A8 family.

Its subcellular location is the cell membrane. It carries out the reaction Release of signal peptides from bacterial membrane prolipoproteins. Hydrolyzes -Xaa-Yaa-Zaa-|-(S,diacylglyceryl)Cys-, in which Xaa is hydrophobic (preferably Leu), and Yaa (Ala or Ser) and Zaa (Gly or Ala) have small, neutral side chains.. The protein operates within protein modification; lipoprotein biosynthesis (signal peptide cleavage). This protein specifically catalyzes the removal of signal peptides from prolipoproteins. This Geobacillus thermodenitrificans (strain NG80-2) protein is Lipoprotein signal peptidase.